A 925-amino-acid chain; its full sequence is Probable glycoprotein hormone G-protein coupled receptor (925 aa).

Residues 1–27 (MEDRGICPRVLQVLFLVVLILISPVYA) form the signal peptide. Residues 28–529 (AKNDACTKCS…EDIMGYVWLT (502 aa)) lie on the Extracellular side of the membrane. Asn-61 carries N-linked (GlcNAc...) asparagine glycosylation. 8 LRR repeats span residues 85 to 106 (KLKY…RVKN), 110 to 131 (SLIT…AFDD), 134 to 155 (QLTQ…NKTS), 156 to 180 (SVTK…GNLP), 181 to 202 (SLEN…IFRQ), 203 to 224 (NTRL…NEDA), 230 to 250 (SLKT…RGLK), and 251 to 273 (NLHF…DSIR). The N-linked (GlcNAc...) asparagine glycan is linked to Asn-152. An N-linked (GlcNAc...) asparagine glycan is attached at Asn-212. The segment at 299–493 (TMQKPSTEEN…PTLIPHSNHT (195 aa)) is disordered. Positions 301-318 (QKPSTEENNGQTTASSPT) are enriched in polar residues. A 1; truncated repeat occupies 333 to 349 (STQPHTTSGFGGGGFPG). The segment at 333 to 461 (STQPHTTSGF…PGGGGFPGGG (129 aa)) is 5 X approximate tandem repeats. The segment covering 341 to 362 (GFGGGGFPGGGGGFPGGGGFPA) has biased composition (gly residues). Tandem repeats lie at residues 350-384 (GGGG…GFPG), 385-419 (GGGG…GFPG), and 420-453 (GGGG…GFPG). The span at 365–375 (SKTSTQPHTTS) shows a compositional bias: polar residues. A compositionally biased stretch (gly residues) spans 376-397 (GFGGGGFPGGGGGFPGGGGFPA). Residues 400 to 410 (SKTSTQPHTTS) are compositionally biased toward polar residues. Positions 411–432 (GFGGGGFPGGGGGFPGGGGFPG) are enriched in gly residues. The span at 434-445 (SNTSTQPHTTSN) shows a compositional bias: polar residues. A glycan (N-linked (GlcNAc...) asparagine) is linked at Asn-435. The segment covering 446-462 (SGGGGFPGGGGFPGGGT) has biased composition (gly residues). The stretch at 454–461 (GGGFPGGG) is one 5; truncated repeat. Residues 476-493 (VHQSTADPPTLIPHSNHT) are compositionally biased toward polar residues. Asn-495 carries N-linked (GlcNAc...) asparagine glycosylation. The helical transmembrane segment at 530-551 (VVSFMVGAVALVANLVVALVLL) threads the bilayer. The Cytoplasmic segment spans residues 552–561 (TSQRRLNVTR). The chain crosses the membrane as a helical span at residues 562-584 (FLMCNLAFADFILGLYIFILTSV). Over 585–606 (SAVTRGDYHNYVQQWQNGAGCK) the chain is Extracellular. The helical transmembrane segment at 607–628 (ILGFLAVFSSELSLFTLVMMTI) threads the bilayer. Over 629-651 (ERFYAIVHAMHMNARLSFRKTVR) the chain is Cytoplasmic. A helical membrane pass occupies residues 652–673 (FMIGGWIFALVMAVVPLTGVSG). Over 674-691 (YSKVAICLPFDVSDATST) the chain is Extracellular. The helical transmembrane segment at 692–712 (AYVAFLLLVNGASFISVMYLY) threads the bilayer. The Cytoplasmic segment spans residues 713-739 (SRMLYVVVSGGDMEGAPKRNDSKVAKR). A helical membrane pass occupies residues 740 to 763 (MAILVFTDMLCWAPIAFFGLLAAF). Residues 764–774 (GQTLLTVTQSK) lie on the Extracellular side of the membrane. The helical transmembrane segment at 775–795 (ILLVFFFPINSICNPFLYAFF) threads the bilayer. At 796–925 (TKAFKRELFT…QKQKILQSPS (130 aa)) the chain is on the cytoplasmic side. Residues 904–925 (VTKSSSPPHLKLQKQKILQSPS) form a disordered region.

The protein belongs to the G-protein coupled receptor 1 family. FSH/LSH/TSH subfamily.

Its subcellular location is the cell membrane. In terms of biological role, probable receptor for a glycoprotein hormone. The chain is Probable glycoprotein hormone G-protein coupled receptor from Anthopleura elegantissima (Green aggregating anemone).